The following is an 874-amino-acid chain: Probable inorganic carbon transporter subunit DabA (874 aa).

Cys398, Asp400, His580, and Cys595 together coordinate Zn(2+).

This sequence belongs to the inorganic carbon transporter (TC 9.A.2) DabA family. Forms a complex with DabB. Zn(2+) serves as cofactor.

It is found in the cell membrane. Part of an energy-coupled inorganic carbon pump. The polypeptide is Probable inorganic carbon transporter subunit DabA (Bacillus cereus (strain ZK / E33L)).